The chain runs to 407 residues: Tryptophan synthase beta chain (407 aa).

At K91 the chain carries N6-(pyridoxal phosphate)lysine.

Belongs to the TrpB family. Tetramer of two alpha and two beta chains. It depends on pyridoxal 5'-phosphate as a cofactor.

It carries out the reaction (1S,2R)-1-C-(indol-3-yl)glycerol 3-phosphate + L-serine = D-glyceraldehyde 3-phosphate + L-tryptophan + H2O. Its pathway is amino-acid biosynthesis; L-tryptophan biosynthesis; L-tryptophan from chorismate: step 5/5. Its function is as follows. The beta subunit is responsible for the synthesis of L-tryptophan from indole and L-serine. The protein is Tryptophan synthase beta chain of Streptococcus pneumoniae (strain JJA).